A 153-amino-acid chain; its full sequence is uncharacterized protein (153 aa).

Positions 1–88 (MDKDRPGLPA…VPPPQLDHPG (88 aa)) are disordered.

This is an uncharacterized protein from Epstein-Barr virus (strain P3HR-1) (HHV-4).